Consider the following 535-residue polypeptide: T-complex protein 1 subunit beta (535 aa).

At A2 the chain carries N-acetylalanine. S3 is modified (phosphoserine). N6-acetyllysine is present on K13. G44 contributes to the ADP binding site. G44 contributes to the ATP binding site. S60 carries the phosphoserine modification. D97 contacts Mg(2+). The ADP site is built by G98, T99, T100, and S101. ATP-binding residues include G98, T99, and T100. An N6-acetyllysine modification is found at K154. Residues S168 and S169 each contribute to the ADP site. At K181 the chain carries N6-acetyllysine. A Glycyl lysine isopeptide (Lys-Gly) (interchain with G-Cter in SUMO2) cross-link involves residue K248. Position 260 is a phosphoserine (S260). Residue T261 is modified to Phosphothreonine. 3 residues coordinate ADP: G410, E495, and K500. ATP contacts are provided by E495 and K500.

Belongs to the TCP-1 chaperonin family. Component of the chaperonin-containing T-complex (TRiC), a hexadecamer composed of two identical back-to-back stacked rings enclosing a protein folding chamber. Each ring is made up of eight different subunits: TCP1/CCT1, CCT2, CCT3, CCT4, CCT5, CCT6A/CCT6, CCT7, CCT8. Interacts with PACRG. Interacts with FLCN. Interacts with DLEC1. Interacts with SVEP1.

The protein localises to the cytoplasm. It catalyses the reaction ATP + H2O = ADP + phosphate + H(+). Its function is as follows. Component of the chaperonin-containing T-complex (TRiC), a molecular chaperone complex that assists the folding of actin, tubulin and other proteins upon ATP hydrolysis. The TRiC complex mediates the folding of WRAP53/TCAB1, thereby regulating telomere maintenance. As part of the TRiC complex may play a role in the assembly of BBSome, a complex involved in ciliogenesis regulating transports vesicles to the cilia. The protein is T-complex protein 1 subunit beta (CCT2) of Bos taurus (Bovine).